The following is a 155-amino-acid chain: Ribonuclease H (155 aa).

The RNase H type-1 domain occupies Met1–Asp143. Residues Asp9, Glu47, Asp69, and Asp135 each contribute to the Mg(2+) site.

The protein belongs to the RNase H family. Monomer. Mg(2+) is required as a cofactor.

Its subcellular location is the cytoplasm. The enzyme catalyses Endonucleolytic cleavage to 5'-phosphomonoester.. Functionally, endonuclease that specifically degrades the RNA of RNA-DNA hybrids. The polypeptide is Ribonuclease H (Verminephrobacter eiseniae (strain EF01-2)).